A 404-amino-acid polypeptide reads, in one-letter code: Argininosuccinate synthase (404 aa).

ATP is bound by residues 10-18 and alanine 38; that span reads AYSGGVDTS. An L-citrulline-binding site is contributed by tyrosine 89. An ATP-binding site is contributed by glycine 119. L-aspartate contacts are provided by threonine 121, asparagine 125, and aspartate 126. Asparagine 125 contacts L-citrulline. Residues arginine 129, serine 177, serine 186, glutamate 262, and tyrosine 274 each contribute to the L-citrulline site.

The protein belongs to the argininosuccinate synthase family. Type 1 subfamily. Homotetramer.

The protein resides in the cytoplasm. The catalysed reaction is L-citrulline + L-aspartate + ATP = 2-(N(omega)-L-arginino)succinate + AMP + diphosphate + H(+). The protein operates within amino-acid biosynthesis; L-arginine biosynthesis; L-arginine from L-ornithine and carbamoyl phosphate: step 2/3. The polypeptide is Argininosuccinate synthase (Prochlorococcus marinus (strain MIT 9215)).